A 424-amino-acid polypeptide reads, in one-letter code: MSPNSKGVEILSIGTELLLGNITNTNAQWISEQLSQLGLNHFRQSTVGDNRDRIIKVIQEISQRSNLLITTGGLGPTPDDLTTEAIATSFNVSLFERPHLWDEIKQKTSNSKLQDNSSSLRKQCFFPKNAQIINNPRGTAPGMIWEPIKGFTILTFPGVPSEMKTMWKETAFDFIKTKFSDSYSFFSKTLKFSGIGESSVAEKINDLLNLKNPTVAPYANLGEVKLRITARAKNEVEAKNIIKPVKEKLKKKFPKFIFGEDNDTLPSVLIKELAKRNETIVFAESCTGGLLSSSITSISGSSQVFQGSIVSYSNELKNSLLNISEDNLKKYGAVSEEVCEAMAINIKNRLGADWAIGVSGIAGPNGGSQEKPVGLVYISIAGPNNHITNIKKKYNSTRNRIEIQTLSVNVCLNSLRLILLSNSK.

The protein belongs to the CinA family.

This Prochlorococcus marinus (strain MIT 9215) protein is CinA-like protein.